Reading from the N-terminus, the 516-residue chain is Arabinose import ATP-binding protein AraG (516 aa).

2 ABC transporter domains span residues 5–240 and 240–497; these read LRFD…MVGR and REIS…LPQS. 37-44 provides a ligand contact to ATP; the sequence is GENGAGKS.

It belongs to the ABC transporter superfamily. Arabinose importer (TC 3.A.1.2.2) family. In terms of assembly, the complex is composed of two ATP-binding proteins (AraG), two transmembrane proteins (AraH) and a solute-binding protein (AraF).

The protein resides in the cell inner membrane. The enzyme catalyses L-arabinose(out) + ATP + H2O = L-arabinose(in) + ADP + phosphate + H(+). Its function is as follows. Part of the ABC transporter complex AraFGH involved in arabinose import. Responsible for energy coupling to the transport system. This is Arabinose import ATP-binding protein AraG from Paraburkholderia xenovorans (strain LB400).